Here is a 405-residue protein sequence, read N- to C-terminus: Cysteine desulfurase IscS (405 aa).

Pyridoxal 5'-phosphate-binding positions include 75-76 (AT), Asn-156, Gln-184, and 204-206 (SAH). Residue Lys-207 is modified to N6-(pyridoxal phosphate)lysine. Thr-244 contributes to the pyridoxal 5'-phosphate binding site. Cys-329 functions as the Cysteine persulfide intermediate in the catalytic mechanism. [2Fe-2S] cluster is bound at residue Cys-329.

This sequence belongs to the class-V pyridoxal-phosphate-dependent aminotransferase family. NifS/IscS subfamily. As to quaternary structure, homodimer. Forms a heterotetramer with IscU, interacts with other sulfur acceptors. The cofactor is pyridoxal 5'-phosphate.

It localises to the cytoplasm. The enzyme catalyses (sulfur carrier)-H + L-cysteine = (sulfur carrier)-SH + L-alanine. The protein operates within cofactor biosynthesis; iron-sulfur cluster biosynthesis. Its function is as follows. Master enzyme that delivers sulfur to a number of partners involved in Fe-S cluster assembly, tRNA modification or cofactor biosynthesis. Catalyzes the removal of elemental sulfur atoms from cysteine to produce alanine. Functions as a sulfur delivery protein for Fe-S cluster synthesis onto IscU, an Fe-S scaffold assembly protein, as well as other S acceptor proteins. In Acinetobacter baumannii (strain SDF), this protein is Cysteine desulfurase IscS.